A 200-amino-acid polypeptide reads, in one-letter code: Holliday junction resolvase RecU (200 aa).

Positions 82, 84, 97, and 116 each coordinate Mg(2+).

The protein belongs to the RecU family. It depends on Mg(2+) as a cofactor.

Its subcellular location is the cytoplasm. The enzyme catalyses Endonucleolytic cleavage at a junction such as a reciprocal single-stranded crossover between two homologous DNA duplexes (Holliday junction).. In terms of biological role, endonuclease that resolves Holliday junction intermediates in genetic recombination. Cleaves mobile four-strand junctions by introducing symmetrical nicks in paired strands. Promotes annealing of linear ssDNA with homologous dsDNA. Required for DNA repair, homologous recombination and chromosome segregation. This chain is Holliday junction resolvase RecU, found in Streptococcus sanguinis (strain SK36).